Here is a 136-residue protein sequence, read N- to C-terminus: Salivary protein 15 Iric-2 (136 aa).

Residues 1-22 form the signal peptide; the sequence is MESFVAMKVVCIVLLFVIAAEA. N-linked (GlcNAc...) asparagine glycosylation occurs at Asn105. The CD4-binding stretch occupies residues 117-136; the sequence is GPKNQTCENKDQCVPHIPGC.

Belongs to the salp15 family. As to quaternary structure, interacts with host CD4. Interacts with host DC-SIGN (CD209). Interacts with Borrelia outer surface protein C (OspC). In terms of tissue distribution, expressed in salivary glands. Detected in fed adult female.

It is found in the secreted. Functionally, salivary tick protein that downregulates host immune system by binding to both dendritic cells, and CD4(+) T cells. Specifically binds to the CD4 coreceptor on T cells. This interaction prevents the activation of the Src kinase, Lck, and its downstream substrate Zap-70, and results in deficient activation of PLCgamma1, the repression of calcium fluxes triggered by T-cell antigen receptor (TCR) ligation, and a subsequent reduction in interleukin-2 production. This salivary protein also binds to DC-SIGN (CD209) on dendritic cells (DC) and activates the Raf-1 kinase/MEK signaling pathway that results in down-regulating expression of pro-inflammatory cytokines. Furthermore, it inhibits T cell proliferation induced by DCs. In addition, it inhibits in vitro keratinocyte inflammation induced by Borrelia burgdorferi or by the major outer surface protein (OspC) of Borrelia. In addition, it downregulates chemokines and monocyte chemoattractant protein 1, as well as several antimicrobial peptides such as defensins, cathelicidin, psoriasin, and RNase 7. Apart from its immunomodulatory activities, it is also associated with protection of Borrelia spirochetes from antibody-mediated killing through its binding to OspC. In vivo, tests on different immune disease animal models show promising therapeutic results, e.g., in inhibiting HIV infection, experimental autoimmune encephalomyelitis, transplantation rejection, and asthma. The polypeptide is Salivary protein 15 Iric-2 (Ixodes ricinus (Common tick)).